The following is a 114-amino-acid chain: MSNPFQNIGKNLLYISAAGIASIYVVKTIVKARRDAKFIPKARGNNGEVNEKNYYDNLAQVKPGFPIPKDGGDNIDCSEDHQLVRKSKYEGSGLSAVTRKRGDKLGFLDRRRNE.

The chain crosses the membrane as a helical span at residues 13 to 30 (LYISAAGIASIYVVKTIV).

The protein resides in the mitochondrion outer membrane. This is an uncharacterized protein from Saccharomyces cerevisiae (strain ATCC 204508 / S288c) (Baker's yeast).